Here is a 428-residue protein sequence, read N- to C-terminus: 3-phosphoshikimate 1-carboxyvinyltransferase (428 aa).

K21, S22, and R26 together coordinate 3-phosphoshikimate. K21 contributes to the phosphoenolpyruvate binding site. Positions 94 and 122 each coordinate phosphoenolpyruvate. 3-phosphoshikimate-binding residues include S166, S167, Q168, S194, D306, and K333. Q168 is a phosphoenolpyruvate binding site. D306 (proton acceptor) is an active-site residue. Residues R337, R379, and K405 each coordinate phosphoenolpyruvate.

Belongs to the EPSP synthase family. Monomer.

Its subcellular location is the cytoplasm. The enzyme catalyses 3-phosphoshikimate + phosphoenolpyruvate = 5-O-(1-carboxyvinyl)-3-phosphoshikimate + phosphate. It functions in the pathway metabolic intermediate biosynthesis; chorismate biosynthesis; chorismate from D-erythrose 4-phosphate and phosphoenolpyruvate: step 6/7. Catalyzes the transfer of the enolpyruvyl moiety of phosphoenolpyruvate (PEP) to the 5-hydroxyl of shikimate-3-phosphate (S3P) to produce enolpyruvyl shikimate-3-phosphate and inorganic phosphate. The protein is 3-phosphoshikimate 1-carboxyvinyltransferase of Clostridium acetobutylicum (strain ATCC 824 / DSM 792 / JCM 1419 / IAM 19013 / LMG 5710 / NBRC 13948 / NRRL B-527 / VKM B-1787 / 2291 / W).